The primary structure comprises 481 residues: MQVLSVTPEIFPLIKTGGLADVTGALPVALAAKGVTMRTLIPGFPAVMEGFKKRKAVYQYPLLQGGKASIHAVQIAGLDLFVLDAPHLFDRPGGPYGNASGADWPDNWRRFAALSQAGADIAGGAISGYLPEIVHAHDWQSAMTLAYMRYGKAVGTPSMMTVHNLAFQGQFGAGIFGELGLPAVAMALDGVEYYGGVGFLKAGLQAAWAITTVSPTYAQEIRSPEFGMGLDGLINMRSSDLYGIVNGIDTAIWDPETDKHLVSNYTATTLKARAPNRAAVEERFGLDRDDSPIVCVISRLTWQKGMDILATVIDGIVATGARLAILGSGDAGLEGALLAAAARHRGRIGVVIGYDEGLSHTMQGGCDAIIIPSRFEPCGLTQLYGLRYGCVPVVARTGGLADTIIDANEAAMAAGVATGLQFAPNNGGAMLHAIRRLVDAYADPAAFETIQRQGMKADVSWDKSAEKYLELYRLLLSKRVA.

Residue K15 participates in ADP-alpha-D-glucose binding.

This sequence belongs to the glycosyltransferase 1 family. Bacterial/plant glycogen synthase subfamily.

The enzyme catalyses [(1-&gt;4)-alpha-D-glucosyl](n) + ADP-alpha-D-glucose = [(1-&gt;4)-alpha-D-glucosyl](n+1) + ADP + H(+). Its pathway is glycan biosynthesis; glycogen biosynthesis. In terms of biological role, synthesizes alpha-1,4-glucan chains using ADP-glucose. The sequence is that of Glycogen synthase from Mesorhizobium japonicum (strain LMG 29417 / CECT 9101 / MAFF 303099) (Mesorhizobium loti (strain MAFF 303099)).